Here is a 161-residue protein sequence, read N- to C-terminus: Beta-lactoglobulin-2 (161 aa).

2 disulfide bridges follow: C66-C159 and C106-C119.

It belongs to the calycin superfamily. Lipocalin family. In terms of assembly, monomer. In terms of tissue distribution, synthesized in mammary gland and secreted in milk.

The protein localises to the secreted. Primary component of whey, it binds retinol and is probably involved in the transport of that molecule. This is Beta-lactoglobulin-2 (LGB2) from Canis lupus familiaris (Dog).